Consider the following 543-residue polypeptide: CTP synthase (543 aa).

Positions 1-265 are amidoligase domain; that stretch reads MTRYVFITGG…DREVLRHFGL (265 aa). Ser13 lines the CTP pocket. Ser13 contributes to the UTP binding site. 14–19 provides a ligand contact to ATP; it reads SLGKGI. L-glutamine is bound at residue Tyr54. Asp71 serves as a coordination point for ATP. Residues Asp71 and Glu139 each coordinate Mg(2+). CTP is bound by residues 146–148, 186–191, and Lys222; these read DIE and KTKPTQ. Residues 186 to 191 and Lys222 contribute to the UTP site; that span reads KTKPTQ. Val240 contributes to the ATP binding site. The Glutamine amidotransferase type-1 domain maps to 291-542; it reads TIAVVGKYTN…IEAAVKQMRL (252 aa). Residue Gly353 participates in L-glutamine binding. Catalysis depends on Cys380, which acts as the Nucleophile; for glutamine hydrolysis. L-glutamine-binding positions include 381 to 384, Glu404, and Arg470; that span reads FGMQ. Active-site residues include His515 and Glu517.

The protein belongs to the CTP synthase family. In terms of assembly, homotetramer.

The catalysed reaction is UTP + L-glutamine + ATP + H2O = CTP + L-glutamate + ADP + phosphate + 2 H(+). It catalyses the reaction L-glutamine + H2O = L-glutamate + NH4(+). It carries out the reaction UTP + NH4(+) + ATP = CTP + ADP + phosphate + 2 H(+). Its pathway is pyrimidine metabolism; CTP biosynthesis via de novo pathway; CTP from UDP: step 2/2. With respect to regulation, allosterically activated by GTP, when glutamine is the substrate; GTP has no effect on the reaction when ammonia is the substrate. The allosteric effector GTP functions by stabilizing the protein conformation that binds the tetrahedral intermediate(s) formed during glutamine hydrolysis. Inhibited by the product CTP, via allosteric rather than competitive inhibition. Functionally, catalyzes the ATP-dependent amination of UTP to CTP with either L-glutamine or ammonia as the source of nitrogen. Regulates intracellular CTP levels through interactions with the four ribonucleotide triphosphates. This is CTP synthase from Acidiphilium cryptum (strain JF-5).